Consider the following 256-residue polypeptide: Protein FixA (256 aa).

Belongs to the ETF beta-subunit/FixA family. In terms of assembly, heterodimer of FixA and FixB.

The protein operates within amine and polyamine metabolism; carnitine metabolism. Its function is as follows. Required for anaerobic carnitine reduction. May bring reductant to CaiA. The sequence is that of Protein FixA from Escherichia coli O7:K1 (strain IAI39 / ExPEC).